A 342-amino-acid polypeptide reads, in one-letter code: Flagellar P-ring protein (342 aa).

The N-terminal stretch at 1–19 (MKRVFLWLIFVLAFHKLLA) is a signal peptide.

The protein belongs to the FlgI family. As to quaternary structure, the basal body constitutes a major portion of the flagellar organelle and consists of four rings (L,P,S, and M) mounted on a central rod.

It is found in the periplasm. It localises to the bacterial flagellum basal body. Its function is as follows. Assembles around the rod to form the L-ring and probably protects the motor/basal body from shearing forces during rotation. This Helicobacter pylori (strain G27) protein is Flagellar P-ring protein.